Consider the following 205-residue polypeptide: ATP-dependent Clp protease proteolytic subunit 2 (205 aa).

The active-site Nucleophile is the Ser-100. The active site involves His-125.

The protein belongs to the peptidase S14 family. Fourteen ClpP subunits assemble into 2 heptameric rings which stack back to back to give a disk-like structure with a central cavity, resembling the structure of eukaryotic proteasomes.

It is found in the cytoplasm. It carries out the reaction Hydrolysis of proteins to small peptides in the presence of ATP and magnesium. alpha-casein is the usual test substrate. In the absence of ATP, only oligopeptides shorter than five residues are hydrolyzed (such as succinyl-Leu-Tyr-|-NHMec, and Leu-Tyr-Leu-|-Tyr-Trp, in which cleavage of the -Tyr-|-Leu- and -Tyr-|-Trp bonds also occurs).. Functionally, cleaves peptides in various proteins in a process that requires ATP hydrolysis. Has a chymotrypsin-like activity. Plays a major role in the degradation of misfolded proteins. The protein is ATP-dependent Clp protease proteolytic subunit 2 of Chlamydia abortus (strain DSM 27085 / S26/3) (Chlamydophila abortus).